We begin with the raw amino-acid sequence, 31 residues long: Photosystem II reaction center protein T (31 aa).

Residues 3-23 (ALVYVFLLVGTLMVIFFAIFF) form a helical membrane-spanning segment.

Belongs to the PsbT family. PSII is composed of 1 copy each of membrane proteins PsbA, PsbB, PsbC, PsbD, PsbE, PsbF, PsbH, PsbI, PsbJ, PsbK, PsbL, PsbM, PsbT, PsbX, PsbY, PsbZ, Psb30/Ycf12, at least 3 peripheral proteins of the oxygen-evolving complex and a large number of cofactors. It forms dimeric complexes.

It is found in the plastid. Its subcellular location is the chloroplast thylakoid membrane. Functionally, found at the monomer-monomer interface of the photosystem II (PS II) dimer, plays a role in assembly and dimerization of PSII. PSII is a light-driven water plastoquinone oxidoreductase, using light energy to abstract electrons from H(2)O, generating a proton gradient subsequently used for ATP formation. The protein is Photosystem II reaction center protein T of Gracilaria tenuistipitata var. liui (Red alga).